The chain runs to 102 residues: RNA-binding protein Hfq (102 aa).

The 60-residue stretch at 9–68 (DPFLNALRRERVPVSIYLVNGIKLQGQIESFDQFVILLKNTVSQMVYKHAISTVVPSRPV) folds into the Sm domain. The segment at 63–102 (VPSRPVSHHSNNAGGGSNNYHHSNNAQPSSAASQDSEDAE) is disordered. Low complexity predominate over residues 70-96 (HHSNNAGGGSNNYHHSNNAQPSSAASQ).

Belongs to the Hfq family. In terms of assembly, homohexamer.

Functionally, RNA chaperone that binds small regulatory RNA (sRNAs) and mRNAs to facilitate mRNA translational regulation in response to envelope stress, environmental stress and changes in metabolite concentrations. Also binds with high specificity to tRNAs. This is RNA-binding protein Hfq from Cronobacter sakazakii (strain ATCC BAA-894) (Enterobacter sakazakii).